A 384-amino-acid chain; its full sequence is Alpha-2B adrenergic receptor (384 aa).

The helical transmembrane segment at 1-25 (AIAAVITFLILFTIFGNALVILAVL) threads the bilayer. Over 26–36 (TSRSLRAPQNL) the chain is Cytoplasmic. Residues 37–62 (FLVSLAAADILVATLIIPFSLANELL) form a helical membrane-spanning segment. Residues 63-72 (GYWYFRRTWC) lie on the Extracellular side of the membrane. An intrachain disulfide couples C72 to C151. Residues 73–95 (EVYLALDVLFCTSSIVHLCAISL) form a helical membrane-spanning segment. At 96–117 (DRYWAVSRALQYNSKRTPRRIK) the chain is on the cytoplasmic side. A helical membrane pass occupies residues 118-140 (CVILTVWLIAAAISLPPLIYKGD). Over 141-156 (QGPQPRGRPQCKLNQE) the chain is Extracellular. A helical transmembrane segment spans residues 157-180 (AWYILSSSIGSFFAPCLIMILVYL). At 181-348 (RIYLIAKRSN…LTREKRFTFV (168 aa)) the chain is on the cytoplasmic side. The interval 192 to 289 (RGPRAKGAPR…PEEEEECGSP (98 aa)) is disordered. Polar residues predominate over residues 218-229 (LANSPTLASSLA). Residues 240-249 (PPGEKERETP) are compositionally biased toward basic and acidic residues. A helical membrane pass occupies residues 349-372 (LAVVIGVFVLCWFPFFFSYSLGAI). The Extracellular portion of the chain corresponds to 373–381 (CPQHCKVPH). Residues 382–384 (GLF) form a helical membrane-spanning segment.

Belongs to the G-protein coupled receptor 1 family. Adrenergic receptor subfamily. ADRA2B sub-subfamily. Interacts with RAB26. Interacts with PPP1R9B. Interacts with GGA1, GGA2 and GGA3.

Its subcellular location is the cell membrane. Alpha-2 adrenergic receptors mediate the catecholamine-induced inhibition of adenylate cyclase through the action of G proteins. This is Alpha-2B adrenergic receptor (ADRA2B) from Elephas maximus (Indian elephant).